A 496-amino-acid polypeptide reads, in one-letter code: Aspartyl/glutamyl-tRNA(Asn/Gln) amidotransferase subunit B (496 aa).

This sequence belongs to the GatB/GatE family. GatB subfamily. Heterotrimer of A, B and C subunits.

It carries out the reaction L-glutamyl-tRNA(Gln) + L-glutamine + ATP + H2O = L-glutaminyl-tRNA(Gln) + L-glutamate + ADP + phosphate + H(+). The enzyme catalyses L-aspartyl-tRNA(Asn) + L-glutamine + ATP + H2O = L-asparaginyl-tRNA(Asn) + L-glutamate + ADP + phosphate + 2 H(+). In terms of biological role, allows the formation of correctly charged Asn-tRNA(Asn) or Gln-tRNA(Gln) through the transamidation of misacylated Asp-tRNA(Asn) or Glu-tRNA(Gln) in organisms which lack either or both of asparaginyl-tRNA or glutaminyl-tRNA synthetases. The reaction takes place in the presence of glutamine and ATP through an activated phospho-Asp-tRNA(Asn) or phospho-Glu-tRNA(Gln). This is Aspartyl/glutamyl-tRNA(Asn/Gln) amidotransferase subunit B from Nitrosospira multiformis (strain ATCC 25196 / NCIMB 11849 / C 71).